Here is a 577-residue protein sequence, read N- to C-terminus: Isocitrate dehydrogenase kinase/phosphatase (577 aa).

ATP contacts are provided by residues alanine 318–methionine 324 and lysine 339. Aspartate 374 is a catalytic residue.

This sequence belongs to the AceK family.

The protein localises to the cytoplasm. It catalyses the reaction L-seryl-[isocitrate dehydrogenase] + ATP = O-phospho-L-seryl-[isocitrate dehydrogenase] + ADP + H(+). Bifunctional enzyme which can phosphorylate or dephosphorylate isocitrate dehydrogenase (IDH) on a specific serine residue. This is a regulatory mechanism which enables bacteria to bypass the Krebs cycle via the glyoxylate shunt in response to the source of carbon. When bacteria are grown on glucose, IDH is fully active and unphosphorylated, but when grown on acetate or ethanol, the activity of IDH declines drastically concomitant with its phosphorylation. The protein is Isocitrate dehydrogenase kinase/phosphatase of Pseudomonas aeruginosa (strain ATCC 15692 / DSM 22644 / CIP 104116 / JCM 14847 / LMG 12228 / 1C / PRS 101 / PAO1).